We begin with the raw amino-acid sequence, 381 residues long: Creatine kinase B-type (381 aa).

Ser4 bears the Phosphoserine mark. Residues Lys11 to Gly98 enclose the Phosphagen kinase N-terminal domain. Thr35 carries the phosphothreonine modification. Residue Lys45 forms a Glycyl lysine isopeptide (Lys-Gly) (interchain with G-Cter in ubiquitin) linkage. Val72 contacts creatine. A compositionally biased stretch (basic and acidic residues) spans Arg96–Leu110. The disordered stretch occupies residues Arg96–Pro123. Residues Lys101 and Lys107 each participate in a glycyl lysine isopeptide (Lys-Gly) (interchain with G-Cter in ubiquitin) cross-link. The residue at position 125 (Tyr125) is a Phosphotyrosine. The Phosphagen kinase C-terminal domain maps to Tyr125–Leu367. ATP-binding positions include Ser128–Arg132, Arg130, Arg132, and His191. The interval Arg130–Arg138 is internal MTS-like signal. A Phosphoserine modification is found at Ser199. A creatine-binding site is contributed by Glu232. Arg236 is a binding site for ATP. Tyr269 bears the 3'-nitrotyrosine mark. Ser285 provides a ligand contact to creatine. Arg292 is a binding site for ATP. Phosphoserine is present on Ser309. Residues Arg320, Arg320 to Val325, and Asp335 each bind ATP. Residue Thr322 is modified to Phosphothreonine. Lys381 is covalently cross-linked (Glycyl lysine isopeptide (Lys-Gly) (interchain with G-Cter in ubiquitin)).

The protein belongs to the ATP:guanido phosphotransferase family. As to quaternary structure, dimer of identical or non-identical chains, which can be either B (brain type) or M (muscle type). With MM being the major form in skeletal muscle and myocardium, MB existing in myocardium, and BB existing in many tissues, especially brain. Interacts with SLC12A6 (via C-terminus); the interaction may be required for SLC12A6 potassium-chloride cotransport activity. Post-translationally, ubiquitinated by the ECS(ASB9) complex, leading to its degradation by the proteasome.

The protein localises to the cytoplasm. It is found in the cytosol. Its subcellular location is the mitochondrion. The protein resides in the cell membrane. The enzyme catalyses creatine + ATP = N-phosphocreatine + ADP + H(+). Functionally, reversibly catalyzes the transfer of phosphate between ATP and various phosphogens (e.g. creatine phosphate). Creatine kinase isoenzymes play a central role in energy transduction in tissues with large, fluctuating energy demands, such as skeletal muscle, heart, brain and spermatozoa. Acts as a key regulator of adaptive thermogenesis as part of the futile creatine cycle: localizes to the mitochondria of thermogenic fat cells and acts by mediating phosphorylation of creatine to initiate a futile cycle of creatine phosphorylation and dephosphorylation. During the futile creatine cycle, creatine and N-phosphocreatine are in a futile cycle, which dissipates the high energy charge of N-phosphocreatine as heat without performing any mechanical or chemical work. The protein is Creatine kinase B-type (CKB) of Oryctolagus cuniculus (Rabbit).